The sequence spans 459 residues: Trichothecene 3-O-acetyltransferase TRI101 (459 aa).

2 residues coordinate Ca(2+): aspartate 218 and isoleucine 221. CoA contacts are provided by residues lysine 253, 266-269, aspartate 302, glutamine 318, and arginine 343; that span reads FVST. Ca(2+) is bound at residue aspartate 376. Residues serine 386 and lysine 390 each coordinate CoA. Glutamate 449 provides a ligand contact to Ca(2+).

The protein belongs to the trichothecene 3-O-acetyltransferase family.

It functions in the pathway sesquiterpene biosynthesis; trichothecene biosynthesis. In terms of biological role, 3-O-acetyltransferase involved in the biosynthesis of trichothecenes, a very large family of chemically related bicyclic sesquiterpene compounds acting as mycotoxins, including T2-toxin. The biosynthesis of trichothecenes begins with the cyclization of farnesyl diphosphate to trichodiene and is catalyzed by the trichodiene synthase TRI5. Trichodiene undergoes a series of oxygenations catalyzed by the cytochrome P450 monooxygenase TRI4. TRI4 controls the addition of four oxygens at C-2, C-3, C-11, and the C-12, C-13-epoxide to form the intermediate isotrichotriol. Isotrichotriol then undergoes a non-enzymatic isomerization and cyclization to form isotrichodermol. During this process, the oxygen at the C-2 position becomes the pyran ring oxygen and the hydroxyl group at C-11 is lost. More complex type A trichothecenes are built by modifying isotrichodermol through a series of paired hydroxylation and acetylation or acylation steps. Isotrichodermol is converted to isotrichodermin by the acetyltransferase TRI101. TRI101 encodes a C-3 transacetylase that acts as a self-protection or resistance factor during biosynthesis and that the presence of a free C-3 hydroxyl group is a key component of Fusarium trichothecene phytotoxicity. A second hydroxyl group is added to C-15 by the trichothecene C-15 hydroxylase TRI11, producing 15-decalonectrin, which is then acetylated by TRI3, producing calonectrin. A third hydroxyl group is added at C-4 by the cytochrome P450 monooxygenase TRI13, converting calonectrin to 3,15-diacetoxyspirpenol, which is subsequently acetylated bythe acetyltransferase TRI7. A fourth hydroxyl group is added to C-8 by the cytochrome P450 monooxygenase TRI1, followed by the addition of an isovaleryl moiety by TRI16. Finally, the acetyl group is removed from the C-3 position by the trichothecene C-3 esterase TRI8 to produce T-2 toxin. The chain is Trichothecene 3-O-acetyltransferase TRI101 from Fusarium sporotrichioides.